The sequence spans 1009 residues: Protein-tyrosine kinase 2-beta (1009 aa).

The FERM domain maps to 39–359 (RILKVCFYSN…GYCRLQGEHQ (321 aa)). 3 positions are modified to phosphoserine: serine 361, serine 375, and serine 399. Residue tyrosine 402 is modified to Phosphotyrosine; by autocatalysis. One can recognise a Protein kinase domain in the interval 425 to 683 (VVLNRILGEG…ELVCSLSDVY (259 aa)). ATP contacts are provided by residues 431-439 (LGEGFFGEV), lysine 457, and 503-509 (ELYPYGE). Aspartate 549 functions as the Proton acceptor in the catalytic mechanism. Tyrosine 579 bears the Phosphotyrosine mark. At tyrosine 580 the chain carries Phosphotyrosine; by SRC, FYN and LCK. The interval 701–725 (TPKILEPTAFQEPPPKPSRPKYRPP) is disordered. Positions 712–725 (EPPPKPSRPKYRPP) are enriched in pro residues. Tyrosine 722 carries the phosphotyrosine modification. Serine 762 is modified (phosphoserine). Threonine 765 carries the post-translational modification Phosphothreonine. An interaction with TGFB1I1 region spans residues 801-1009 (KVKMRQILDK…LANLAHPPAE (209 aa)). Residues tyrosine 819 and tyrosine 834 each carry the phosphotyrosine modification. Phosphoserine is present on serine 839. Threonine 842 bears the Phosphothreonine mark. Tyrosine 849 is modified (phosphotyrosine). Serine 866 carries the post-translational modification Phosphoserine. Positions 868–1009 (QPTANLDRTD…LANLAHPPAE (142 aa)) are focal adhesion targeting (FAT). At tyrosine 881 the chain carries Phosphotyrosine; by SRC.

It belongs to the protein kinase superfamily. Tyr protein kinase family. FAK subfamily. In terms of assembly, homodimer, or homooligomer. Interacts with SIRPA and SH2D3C. Interacts with ARHGAP10. Interacts with DLG4. Interacts with KCNA2. Interacts with NPHP1, ASAP1, ASAP2, ARHGAP26, SKAP2 and TGFB1I1. The Tyr-402 phosphorylated form interacts with SRC (via SH2 domain) and SRC family members. Forms a signaling complex with EPHA1, LCK and phosphatidylinositol 3-kinase; upon activation by EFNA1. Interacts with GRB2 (via SH2 domain). Interacts with P53/TP53 and MDM2. Interacts with MYLK. Interacts with BCAR1. Interacts with PDPK1. Interacts (hypophosphorylated) with PXN. Interacts with RB1CC1. Interacts with RHOU. Interacts with VAV1. Interacts with LPXN and PTPN12. Post-translationally, phosphorylated on tyrosine residues in response to various stimuli that elevate the intracellular calcium concentration; this activation is indirect and may be mediated by production of reactive oxygen species (ROS). Tyr-402 is the major autophosphorylation site, but other kinases can also phosphorylate Tyr-402. Autophosphorylation occurs in trans, i.e. one subunit of the dimeric receptor phosphorylates tyrosine residues on the other subunit. Phosphorylation at Tyr-402 promotes interaction with SRC and SRC family members, leading to phosphorylation at Tyr-579; Tyr-580 and Tyr-881. Phosphorylation at Tyr-881 is important for interaction with GRB2. Phosphorylated on tyrosine residues upon activation of FGR and PKC. Recruitment by NPHP1 to cell matrix adhesions initiates Tyr-402 phosphorylation. In monocytes, adherence to substrata is required for tyrosine phosphorylation and kinase activation. Angiotensin II, thapsigargin and L-alpha-lysophosphatidic acid (LPA) also induce autophosphorylation and increase kinase activity. Phosphorylation by MYLK promotes ITGB2 activation and is thus essential to trigger neutrophil transmigration during lung injury. Dephosphorylated by PTPN12. In terms of tissue distribution, most abundant in the brain, with highest levels in amygdala and hippocampus. Low levels in kidney (at protein level). Also expressed in spleen and lymphocytes.

It is found in the cytoplasm. It localises to the perinuclear region. The protein resides in the cell membrane. Its subcellular location is the cell junction. The protein localises to the focal adhesion. It is found in the cell projection. It localises to the lamellipodium. The protein resides in the cell cortex. Its subcellular location is the nucleus. The catalysed reaction is L-tyrosyl-[protein] + ATP = O-phospho-L-tyrosyl-[protein] + ADP + H(+). Its activity is regulated as follows. Activated in response to stimuli that lead to increased intracellular Ca(2+) levels; this activation is indirect and may be mediated by calcium-mediated production of reactive oxygen species (ROS). Activated by autophosphorylation at Tyr-402; this creates a binding site for SRC family kinases and leads to phosphorylation at additional tyrosine residues. Phosphorylation at Tyr-402, Tyr-579 and Tyr-580 is required for optimal kinase activity. Inhibited by PF-562,271, BIRB796, PF-4618433 and by PF-431396, PF-2318841 and their derivatives. Inhibited by sulfoximine-substituted trifluoromethylpyrimidines. Inhibited by 4-amino and 5-aryl substituted pyridinone compounds. In terms of biological role, non-receptor protein-tyrosine kinase that regulates reorganization of the actin cytoskeleton, cell polarization, cell migration, adhesion, spreading and bone remodeling. Plays a role in the regulation of the humoral immune response, and is required for normal levels of marginal B-cells in the spleen and normal migration of splenic B-cells. Required for normal macrophage polarization and migration towards sites of inflammation. Regulates cytoskeleton rearrangement and cell spreading in T-cells, and contributes to the regulation of T-cell responses. Promotes osteoclastic bone resorption; this requires both PTK2B/PYK2 and SRC. May inhibit differentiation and activity of osteoprogenitor cells. Functions in signaling downstream of integrin and collagen receptors, immune receptors, G-protein coupled receptors (GPCR), cytokine, chemokine and growth factor receptors, and mediates responses to cellular stress. Forms multisubunit signaling complexes with SRC and SRC family members upon activation; this leads to the phosphorylation of additional tyrosine residues, creating binding sites for scaffold proteins, effectors and substrates. Regulates numerous signaling pathways. Promotes activation of phosphatidylinositol 3-kinase and of the AKT1 signaling cascade. Promotes activation of NOS3. Regulates production of the cellular messenger cGMP. Promotes activation of the MAP kinase signaling cascade, including activation of MAPK1/ERK2, MAPK3/ERK1 and MAPK8/JNK1. Promotes activation of Rho family GTPases, such as RHOA and RAC1. Recruits the ubiquitin ligase MDM2 to P53/TP53 in the nucleus, and thereby regulates P53/TP53 activity, P53/TP53 ubiquitination and proteasomal degradation. Acts as a scaffold, binding to both PDPK1 and SRC, thereby allowing SRC to phosphorylate PDPK1 at 'Tyr-9, 'Tyr-373', and 'Tyr-376'. Promotes phosphorylation of NMDA receptors by SRC family members, and thereby contributes to the regulation of NMDA receptor ion channel activity and intracellular Ca(2+) levels. May also regulate potassium ion transport by phosphorylation of potassium channel subunits. Phosphorylates SRC; this increases SRC kinase activity. Phosphorylates ASAP1, NPHP1, KCNA2 and SHC1. Promotes phosphorylation of ASAP2, RHOU and PXN; this requires both SRC and PTK2/PYK2. This Homo sapiens (Human) protein is Protein-tyrosine kinase 2-beta (PTK2B).